The following is a 115-amino-acid chain: Large ribosomal subunit protein bL19 (115 aa).

This sequence belongs to the bacterial ribosomal protein bL19 family.

Functionally, this protein is located at the 30S-50S ribosomal subunit interface and may play a role in the structure and function of the aminoacyl-tRNA binding site. This Syntrophotalea carbinolica (strain DSM 2380 / NBRC 103641 / GraBd1) (Pelobacter carbinolicus) protein is Large ribosomal subunit protein bL19.